Reading from the N-terminus, the 795-residue chain is Protocadherin beta-5 (795 aa).

Positions 1 to 30 are cleaved as a signal peptide; sequence METALAKTPQKRQVMFLAILLLLWEAGSEA. Over 31–689 the chain is Extracellular; sequence VRYSIPEETE…AQADSLTVYL (659 aa). Cadherin domains are found at residues 35–133, 138–242, 247–346, 351–450, and 455–560; these read IPEE…APEF, MLLK…APEF, YEVQ…APEL, LSSP…APAF, and YTLF…SPFV. Asn-169 carries N-linked (GlcNAc...) asparagine glycosylation. Lys-296 is modified (N6-acetyllysine). 2 N-linked (GlcNAc...) asparagine glycosylation sites follow: Asn-417 and Asn-435. The N-linked (GlcNAc...) asparagine glycan is linked to Asn-566. The region spanning 567–670 is the Cadherin 6 domain; that stretch reads GSAPCTELVP…LVDGFSQPYL (104 aa). A helical transmembrane segment spans residues 690-710; sequence VVALASVSSLFLFSVLLFVAV. Topologically, residues 711–795 are cytoplasmic; it reads RLCRRSRAAP…AAFRNSFGLN (85 aa).

The protein resides in the cell membrane. Its function is as follows. Potential calcium-dependent cell-adhesion protein. May be involved in the establishment and maintenance of specific neuronal connections in the brain. The chain is Protocadherin beta-5 (PCDHB5) from Homo sapiens (Human).